A 328-amino-acid chain; its full sequence is Arabinose 5-phosphate isomerase KdsD (328 aa).

One can recognise an SIS domain in the interval Cys-42–Phe-184. Residues Gly-75–Thr-76, His-82, His-88, Ala-114–His-123, Lys-148–Ala-150, Thr-222, and Asp-275 contribute to the substrate site. His-82 contributes to the Zn(2+) binding site. Residues Met-210–Val-268 form the CBS 1 domain. One can recognise a CBS 2 domain in the interval Met-277–Val-328.

The protein belongs to the SIS family. GutQ/KpsF subfamily. In terms of assembly, homotetramer.

It catalyses the reaction D-arabinose 5-phosphate = D-ribulose 5-phosphate. It functions in the pathway carbohydrate biosynthesis; 3-deoxy-D-manno-octulosonate biosynthesis; 3-deoxy-D-manno-octulosonate from D-ribulose 5-phosphate: step 1/3. The protein operates within bacterial outer membrane biogenesis; lipopolysaccharide biosynthesis. Its function is as follows. Involved in the biosynthesis of 3-deoxy-D-manno-octulosonate (KDO), a unique 8-carbon sugar component of lipopolysaccharides (LPSs). Catalyzes the reversible aldol-ketol isomerization between D-ribulose 5-phosphate (Ru5P) and D-arabinose 5-phosphate (A5P). This Escherichia coli O6:H1 (strain CFT073 / ATCC 700928 / UPEC) protein is Arabinose 5-phosphate isomerase KdsD (kdsD).